We begin with the raw amino-acid sequence, 303 residues long: UDP-3-O-acyl-N-acetylglucosamine deacetylase (303 aa).

3 residues coordinate Zn(2+): His79, His238, and Asp242. His265 (proton donor) is an active-site residue.

This sequence belongs to the LpxC family. The cofactor is Zn(2+).

The enzyme catalyses a UDP-3-O-[(3R)-3-hydroxyacyl]-N-acetyl-alpha-D-glucosamine + H2O = a UDP-3-O-[(3R)-3-hydroxyacyl]-alpha-D-glucosamine + acetate. It participates in glycolipid biosynthesis; lipid IV(A) biosynthesis; lipid IV(A) from (3R)-3-hydroxytetradecanoyl-[acyl-carrier-protein] and UDP-N-acetyl-alpha-D-glucosamine: step 2/6. Its function is as follows. Catalyzes the hydrolysis of UDP-3-O-myristoyl-N-acetylglucosamine to form UDP-3-O-myristoylglucosamine and acetate, the committed step in lipid A biosynthesis. The protein is UDP-3-O-acyl-N-acetylglucosamine deacetylase of Pseudoalteromonas translucida (strain TAC 125).